The following is a 403-amino-acid chain: Phosphoglycerate kinase (403 aa).

Substrate contacts are provided by residues 21 to 23, Arg-36, 59 to 62, Arg-118, and Arg-151; these read DFN and HLGR. ATP-binding positions include Lys-202, Glu-328, and 354-357; that span reads GGDS.

The protein belongs to the phosphoglycerate kinase family. As to quaternary structure, monomer.

It is found in the cytoplasm. The catalysed reaction is (2R)-3-phosphoglycerate + ATP = (2R)-3-phospho-glyceroyl phosphate + ADP. It functions in the pathway carbohydrate degradation; glycolysis; pyruvate from D-glyceraldehyde 3-phosphate: step 2/5. The polypeptide is Phosphoglycerate kinase (Akkermansia muciniphila (strain ATCC BAA-835 / DSM 22959 / JCM 33894 / BCRC 81048 / CCUG 64013 / CIP 107961 / Muc)).